The chain runs to 159 residues: Protein Smg homolog (159 aa).

Belongs to the Smg family.

The protein is Protein Smg homolog of Vibrio vulnificus (strain CMCP6).